A 453-amino-acid polypeptide reads, in one-letter code: Adenylyltransferase and sulfurtransferase MOCS3 (453 aa).

At Thr-62 the chain carries Phosphothreonine. Residues Gly-101, Asp-122, 129–133 (SNFHR), Lys-146, and 190–191 (DN) contribute to the ATP site. Positions 231 and 234 each coordinate Zn(2+). The active-site Glycyl thioester intermediate; for adenylyltransferase activity is the Cys-248. Zn(2+)-binding residues include Cys-306 and Cys-309. One can recognise a Rhodanese domain in the interval 355–451 (QAQPHLLIDV…WTNSVDPSFP (97 aa)). Catalysis depends on Cys-410, which acts as the Cysteine persulfide intermediate; for sulfurtransferase activity.

In the N-terminal section; belongs to the HesA/MoeB/ThiF family. UBA4 subfamily. The cofactor is Zn(2+).

The protein resides in the cytoplasm. It localises to the cytosol. It carries out the reaction [molybdopterin-synthase sulfur-carrier protein]-C-terminal Gly-Gly + ATP + H(+) = [molybdopterin-synthase sulfur-carrier protein]-C-terminal Gly-Gly-AMP + diphosphate. The catalysed reaction is [molybdopterin-synthase sulfur-carrier protein]-C-terminal Gly-Gly-AMP + S-sulfanyl-L-cysteinyl-[cysteine desulfurase] + AH2 = [molybdopterin-synthase sulfur-carrier protein]-C-terminal-Gly-aminoethanethioate + L-cysteinyl-[cysteine desulfurase] + A + AMP + 2 H(+). It functions in the pathway tRNA modification; 5-methoxycarbonylmethyl-2-thiouridine-tRNA biosynthesis. It participates in cofactor biosynthesis; molybdopterin biosynthesis. Functionally, plays a central role in 2-thiolation of mcm(5)S(2)U at tRNA wobble positions of cytosolic tRNA(Lys), tRNA(Glu) and tRNA(Gln). Also essential during biosynthesis of the molybdenum cofactor. Acts by mediating the C-terminal thiocarboxylation of sulfur carriers URM1 and MOCS2A. Its N-terminus first activates URM1 and MOCS2A as acyl-adenylates (-COAMP), then the persulfide sulfur on the catalytic cysteine is transferred to URM1 and MOCS2A to form thiocarboxylation (-COSH) of their C-terminus. The reaction probably involves hydrogen sulfide that is generated from the persulfide intermediate and that acts as a nucleophile towards URM1 and MOCS2A. Subsequently, a transient disulfide bond is formed. Does not use thiosulfate as sulfur donor; NFS1 probably acting as a sulfur donor for thiocarboxylation reactions. This chain is Adenylyltransferase and sulfurtransferase MOCS3, found in Drosophila yakuba (Fruit fly).